Reading from the N-terminus, the 88-residue chain is Homeobox protein knotted-1-like 2 (88 aa).

One can recognise an ELK domain in the interval 4–24 (ELKHELKQGYRDKLVDIREEI). A DNA-binding region (homeobox; TALE-type) is located at residues 25–88 (LRKRRAGKLP…NQRKRNWHNN (64 aa)).

Belongs to the TALE/KNOX homeobox family. Expressed in all tissues examined. Highest expression in leaves.

It is found in the nucleus. The sequence is that of Homeobox protein knotted-1-like 2 (KNOX2) from Zea mays (Maize).